The following is a 1162-amino-acid chain: Spike glycoprotein (1162 aa).

A signal peptide spans 1-18; it reads MLVTPLLLVTLLCALCSA. Residues 19 to 1095 are Extracellular-facing; it reads VLYDSSSYVY…LKTYIKWPWY (1077 aa). Asn-51, Asn-77, Asn-103, Asn-144, Asn-163, Asn-178, Asn-212, Asn-237, Asn-247, Asn-264, Asn-276, Asn-306, Asn-425, Asn-447, Asn-513, Asn-530, Asn-579, Asn-591, Asn-669, Asn-676, and Asn-714 each carry an N-linked (GlcNAc...) asparagine; by host glycan. The heptad repeat 1 (HR1) stretch occupies residues 769-874; the sequence is IPFATQLQAR…QVDRLITGRL (106 aa). A coiled-coil region spans residues 822-866; the sequence is QDVVSKQSAILTETMASLNKNFGAISSVIQEIYQQFDAIQANAQV. N-linked (GlcNAc...) asparagine; by host glycosylation is found at Asn-947, Asn-960, Asn-979, Asn-1014, Asn-1038, Asn-1051, and Asn-1074. Positions 1024 to 1105 are heptad repeat 2 (HR2); it reads NDDFDFNDEL…VWLAIAFATI (82 aa). Residues 1055 to 1083 adopt a coiled-coil conformation; it reads PILDIDSEIDRIQGVIQGLNDSLIDLEKL. Residues 1096 to 1116 form a helical membrane-spanning segment; sequence VWLAIAFATIIFILILGWVFF. Over 1117 to 1162 the chain is Cytoplasmic; the sequence is MTGCCGCCCGCFGIMPLMSKCGKKSSYYTTFDNDVVTEQYRPKKSV. A Di-lysine motif motif is present at residues 1159-1162; that stretch reads KKSV.

The protein belongs to the gammacoronaviruses spike protein family. In terms of assembly, homotrimer; each monomer consists of a S1 and a S2 subunit. The resulting peplomers protrude from the virus surface as spikes. Specific enzymatic cleavages in vivo yield mature proteins. The precursor is processed into S1 and S2 by host cell furin or furin-like protease to yield the mature S1 and S2 proteins. The cleavage site between S1 and S2 requires the optimal sequence [KR]-X-[KR]-R. Additionally, a second cleavage leads to the release of a fusion peptide after viral attachment to host cell receptor.

The protein resides in the virion membrane. The protein localises to the host endoplasmic reticulum-Golgi intermediate compartment membrane. Attaches the virion to the host cell membrane by interacting with sialic acids, initiating the infection. Functionally, mediates fusion of the virion and cellular membranes by acting as a class I viral fusion protein. Under the current model, the protein has at least 3 conformational states: pre-fusion native state, pre-hairpin intermediate state, and post-fusion hairpin state. During viral and target cell membrane fusion, the coiled coil regions (heptad repeats) assume a trimer-of-hairpins structure, positioning the fusion peptide in close proximity to the C-terminal region of the ectodomain. The formation of this structure appears to drive apposition and subsequent fusion of viral and target cell membranes. Its function is as follows. Acts as a viral fusion peptide after S2 cleavage occurring upon virus endocytosis. This is Spike glycoprotein from Avian infectious bronchitis virus (strain Beaudette) (IBV).